Here is a 1415-residue protein sequence, read N- to C-terminus: DNA-directed RNA polymerase subunit beta' (1415 aa).

4 residues coordinate Zn(2+): Cys71, Cys73, Cys86, and Cys89. Mg(2+) contacts are provided by Asp461, Asp463, and Asp465. The Zn(2+) site is built by Cys815, Cys889, Cys896, and Cys899.

The protein belongs to the RNA polymerase beta' chain family. The RNAP catalytic core consists of 2 alpha, 1 beta, 1 beta' and 1 omega subunit. When a sigma factor is associated with the core the holoenzyme is formed, which can initiate transcription. It depends on Mg(2+) as a cofactor. Requires Zn(2+) as cofactor.

It catalyses the reaction RNA(n) + a ribonucleoside 5'-triphosphate = RNA(n+1) + diphosphate. In terms of biological role, DNA-dependent RNA polymerase catalyzes the transcription of DNA into RNA using the four ribonucleoside triphosphates as substrates. The protein is DNA-directed RNA polymerase subunit beta' of Haemophilus influenzae (strain ATCC 51907 / DSM 11121 / KW20 / Rd).